The chain runs to 184 residues: Putative NAD(P)H nitroreductase HI_1542 (184 aa).

FMN is bound by residues 10–12 (RKS), R35, and H39. 122 to 127 (AAQAQG) is a binding site for NAD(+). 132-134 (WIS) contributes to the FMN binding site.

Belongs to the nitroreductase family. Homodimer. Requires FMN as cofactor.

This chain is Putative NAD(P)H nitroreductase HI_1542, found in Haemophilus influenzae (strain ATCC 51907 / DSM 11121 / KW20 / Rd).